We begin with the raw amino-acid sequence, 402 residues long: UPF0261 protein mll9388 (402 aa).

The protein belongs to the UPF0261 family.

The sequence is that of UPF0261 protein mll9388 from Mesorhizobium japonicum (strain LMG 29417 / CECT 9101 / MAFF 303099) (Mesorhizobium loti (strain MAFF 303099)).